Consider the following 345-residue polypeptide: Fibronectin type 3 and ankyrin repeat domains protein 1 (345 aa).

The Fibronectin type-III domain occupies 8–108 (PPSKPHPPVV…LVSVSTTREP (101 aa)). 6 ANK repeats span residues 109–139 (ISSE…KVDV), 143–172 (FGFT…DVNL), 176–205 (SGKD…SWQA), 209–238 (GGCT…EVDV), 243–273 (SGWT…NVNV), and 277–306 (NGKT…DASV).

As to quaternary structure, interacts with COPS5; regulates the phosphorylation of JUN and the transcriptional activity of AP-1. Interacts with RYBP; may prevent the ubiquitin-mediated proteasomal degradation of FANK1. In terms of processing, polyubiquitinated. Polyubiquitination leads to proteasomal degradation. Mostly restricted to testis.

The protein localises to the nucleus. It localises to the cytoplasm. It is found in the cytosol. Its subcellular location is the cytoskeleton. The protein resides in the cilium basal body. The protein localises to the cell projection. It localises to the cilium. Its function is as follows. Through the activation of JUN and AP-1-mediated transcription, may regulate apoptosis. In Homo sapiens (Human), this protein is Fibronectin type 3 and ankyrin repeat domains protein 1.